The sequence spans 183 residues: Glutathione-regulated potassium-efflux system ancillary protein KefG (183 aa).

This sequence belongs to the NAD(P)H dehydrogenase (quinone) family. KefG subfamily. As to quaternary structure, interacts with KefB.

It is found in the cell inner membrane. The enzyme catalyses a quinone + NADH + H(+) = a quinol + NAD(+). It carries out the reaction a quinone + NADPH + H(+) = a quinol + NADP(+). Functionally, regulatory subunit of a potassium efflux system that confers protection against electrophiles. Required for full activity of KefB. The chain is Glutathione-regulated potassium-efflux system ancillary protein KefG from Shigella flexneri serotype 5b (strain 8401).